The sequence spans 183 residues: MTEYDKFAEQLRHPDNPIVFLEVTAGGAPIGTIVIELFADVTPRTAENFRQFCTGEYKKDGVPNGYKNCTFHRVIKDFMIQGGDFCNGDGTGLMSIYGSKFRDENFELKHIGPGMLSMANAGSDTNGCQFFITCAKTDFLDNKHVVFGRVLDGMLTVRKIENVPTGANNKPKLPIVVVQCGQL.

A PPIase cyclophilin-type domain is found at 20 to 182 (FLEVTAGGAP…LPIVVVQCGQ (163 aa)).

Belongs to the cyclophilin-type PPIase family. PPIase H subfamily.

The enzyme catalyses [protein]-peptidylproline (omega=180) = [protein]-peptidylproline (omega=0). Functionally, PPIases accelerate the folding of proteins. It catalyzes the cis-trans isomerization of proline imidic peptide bonds in oligopeptides. The protein is Peptidyl-prolyl cis-trans isomerase 11 (cyn-11) of Caenorhabditis elegans.